We begin with the raw amino-acid sequence, 257 residues long: Aspartate/glutamate leucyltransferase (257 aa).

This sequence belongs to the R-transferase family. Bpt subfamily.

The protein localises to the cytoplasm. It carries out the reaction N-terminal L-glutamyl-[protein] + L-leucyl-tRNA(Leu) = N-terminal L-leucyl-L-glutamyl-[protein] + tRNA(Leu) + H(+). The catalysed reaction is N-terminal L-aspartyl-[protein] + L-leucyl-tRNA(Leu) = N-terminal L-leucyl-L-aspartyl-[protein] + tRNA(Leu) + H(+). Its function is as follows. Functions in the N-end rule pathway of protein degradation where it conjugates Leu from its aminoacyl-tRNA to the N-termini of proteins containing an N-terminal aspartate or glutamate. This is Aspartate/glutamate leucyltransferase from Nitrobacter winogradskyi (strain ATCC 25391 / DSM 10237 / CIP 104748 / NCIMB 11846 / Nb-255).